The primary structure comprises 448 residues: MRKLRQTGTTIAGGQTLFQSPEEGWQLYTSAQAPDGKCVCTAVIPAQSTCARDGRSRELRQLMEKVQNVSQSMEVLELRTFRDLQYVRSMETLMRSLDARLRAADGSVSAKSFQELKDRMTELLPLSSVLEQYKADTRTIVRLREEVRNLSGNLAAIQEEMGAYGYEDLQQRVMALEARLHACAQKLGCGKLTGVSNPITIRAMGSRFGSWMTDTMAPSADSRVWYMDGYYKGRRVLEFRTLGDFIKGQNFIQHLLPQPWAGTGHVVYNGSLFYNKYQSNVVVKYHFRSRSVLVQRSLPGAGYNNTFPYSWGGFSDMDFMVDESGLWAVYTTNQNAGNIVVSRLDPHTLEVVRSWDTGYPKRSAGEAFMICGVLYVTNSHLAGAKVYFAYFTNTSSYEYTDVPFHNQYSHISMLDYNPRERALYTWNNGHQVLYNVTLFHVISTAGDP.

The first 14 residues, 1 to 14 (MRKLRQTGTTIAGG), serve as a signal peptide directing secretion. Coiled coils occupy residues 52–79 (RDGR…LELR) and 130–187 (LEQY…AQKL). N-linked (GlcNAc...) asparagine glycans are attached at residues Asn-68, Asn-149, Asn-269, Asn-304, Asn-393, and Asn-435. The Olfactomedin-like domain maps to 188 to 440 (GCGKLTGVSN…QVLYNVTLFH (253 aa)). A disulfide bridge connects residues Cys-189 and Cys-371.

Peripherally associated with AMPAR complex. AMPAR complex consists of an inner core made of 4 pore-forming GluA/GRIA proteins (GRIA1, GRIA2, GRIA3 and GRIA4) and 4 major auxiliary subunits arranged in a twofold symmetry. One of the two pairs of distinct binding sites is occupied either by CNIH2, CNIH3 or CACNG2, CACNG3. The other harbors CACNG2, CACNG3, CACNG4, CACNG8 or GSG1L. This inner core of AMPAR complex is complemented by outer core constituents binding directly to the GluA/GRIA proteins at sites distinct from the interaction sites of the inner core constituents. Outer core constituents include at least PRRT1, PRRT2, CKAMP44/SHISA9, FRRS1L and NRN1. The proteins of the inner and outer core serve as a platform for other, more peripherally associated AMPAR constituents, including OLFM2. Alone or in combination, these auxiliary subunits control the gating and pharmacology of the AMPAR complex and profoundly impact their biogenesis and protein processing. Interacts with GRIA2. Interacts with OLFM1 and OLFM3. Interacts with SRF; the interaction promotes dissociation of SRF from the transcriptional repressor HEY2. Interacts with RUNX2. As to expression, expressed in the brain (at protein level). In the developing eye, first detected at 12 dpc in the retinal pigmented epithelium and preferentially expressed in differentiating retinal ganglion cells between 15 and 18 dpc. In the brain, expression is detected mainly in the olfactory bulb, cortex, piriform cortex, olfactory trabeculae, and inferior and superior colliculus. In the adult eye, expression is detected mainly in retinal ganglion cells. Expressed in carotid arteries.

The protein resides in the secreted. It localises to the synapse. Its subcellular location is the membrane. It is found in the nucleus. The protein localises to the cytoplasm. Functionally, involved in transforming growth factor beta (TGF-beta)-induced smooth muscle differentiation. TGF-beta induces expression and nuclear translocation of OLFM2 where it binds to SRF, causing its dissociation from the transcriptional repressor HEY2/HERP1 and facilitating binding of SRF to target genes. Plays a role in AMPAR complex organization. Is a regulator of vascular smooth-muscle cell (SMC) phenotypic switching, that acts by promoting RUNX2 and inhibiting MYOCD binding to SRF. SMC phenotypic switching is the process through which vascular SMCs undergo transition between a quiescent contractile phenotype and a proliferative synthetic phenotype in response to pathological stimuli. SMC phenotypic plasticity is essential for vascular development and remodeling. This Mus musculus (Mouse) protein is Noelin-2 (Olfm2).